The chain runs to 252 residues: Pantothenate synthetase (252 aa).

Residue 29–36 (MGNLHAGH) participates in ATP binding. Histidine 36 serves as the catalytic Proton donor. Residue glutamine 60 participates in (R)-pantoate binding. Glutamine 60 serves as a coordination point for beta-alanine. ATP is bound at residue 146-149 (GEKD). (R)-pantoate is bound at residue glutamine 152. Residues valine 175 and 183–186 (CSSR) each bind ATP.

This sequence belongs to the pantothenate synthetase family. In terms of assembly, homodimer.

It localises to the cytoplasm. The enzyme catalyses (R)-pantoate + beta-alanine + ATP = (R)-pantothenate + AMP + diphosphate + H(+). It participates in cofactor biosynthesis; (R)-pantothenate biosynthesis; (R)-pantothenate from (R)-pantoate and beta-alanine: step 1/1. In terms of biological role, catalyzes the condensation of pantoate with beta-alanine in an ATP-dependent reaction via a pantoyl-adenylate intermediate. This Legionella pneumophila (strain Lens) protein is Pantothenate synthetase.